The following is a 98-amino-acid chain: MNQERLYKVLLGPHVSEKATLLAEINNQVVFRVAADAKKPEIKKAVEALFDVKVESVQVVNIKGKTKRTARGMGKRNDIRKAYIRLASGQSIDFVDVE.

The protein belongs to the universal ribosomal protein uL23 family. As to quaternary structure, part of the 50S ribosomal subunit. Contacts protein L29, and trigger factor when it is bound to the ribosome.

One of the early assembly proteins it binds 23S rRNA. One of the proteins that surrounds the polypeptide exit tunnel on the outside of the ribosome. Forms the main docking site for trigger factor binding to the ribosome. This is Large ribosomal subunit protein uL23 from Hahella chejuensis (strain KCTC 2396).